Consider the following 209-residue polypeptide: MLGLIGKKVGMTQVFQGNGVVVPVTVIEFEPNYVIGKKTVERDGYDALIMGSVDLRSSKISKPIRGQYKNLENVEPKRYVIEFKGLKGYDAGDEIGLDAFREIKYVDITGTTKGKGFQGAMKRHNFSGGPSSHGSKFHRHLGGTGQATTPARTFKGTKMAGRMGGEQQTIQNLEVVFIDEEKRAILVKGAVPGVKGSFVIVKKAKKVGV.

The disordered stretch occupies residues 127 to 151 (SGGPSSHGSKFHRHLGGTGQATTPA).

It belongs to the universal ribosomal protein uL3 family. Part of the 50S ribosomal subunit. Forms a cluster with proteins L14 and L19.

One of the primary rRNA binding proteins, it binds directly near the 3'-end of the 23S rRNA, where it nucleates assembly of the 50S subunit. The polypeptide is Large ribosomal subunit protein uL3 (Borrelia turicatae (strain 91E135)).